The chain runs to 42 residues: Conodipine-M beta chain (42 aa).

As to quaternary structure, heterodimer of an alpha and a beta chains; probably disulfide-linked. In terms of tissue distribution, expressed by the venom duct.

It localises to the secreted. Its function is as follows. Heterodimer: conodipine-M catalyzes the calcium-dependent hydrolysis of the 2-acyl groups in 3-sn-phosphoglycerides. This activity may be supported by the alpha chain. Conodipine-M inhibits the binding of isradipine (a ligand specific for L-type calcium channel) to L-type calcium channels. In Conus magus (Magical cone), this protein is Conodipine-M beta chain.